Here is a 1707-residue protein sequence, read N- to C-terminus: Latrophilin Cirl (1707 aa).

Residues 1 to 767 (MLPTILSISY…LFTMFDGNMR (767 aa)) are Extracellular-facing. Positions 25–114 (ACEGKKLTIE…KYLEAHYQCI (90 aa)) constitute an SUEL-type lectin domain. N-linked (GlcNAc...) asparagine glycosylation is present at Asn142. The interval 176-301 (GLFNVPPQHT…TAASGAVVPG (126 aa)) is disordered. 2 stretches are compositionally biased toward polar residues: residues 185–198 (TAVTHSTPSSSTTA) and 256–265 (NATSPSNTRI). A glycan (N-linked (GlcNAc...) asparagine) is linked at Asn256. Residues 275–285 (DDGTLLTTKSS) are compositionally biased toward low complexity. N-linked (GlcNAc...) asparagine glycosylation is found at Asn302, Asn341, Asn398, Asn655, Asn703, and Asn730. The tract at residues 376–400 (YDEYDDDPSSTTPAPNGGDCLHNSS) is disordered. One can recognise a GAIN-B domain in the interval 561 to 754 (RSVVQKVKNI…AILMDVVDEH (194 aa)). 2 cysteine pairs are disulfide-bonded: Cys709–Cys736 and Cys724–Cys738. Positions 709-754 (CVFWNYIDHAWSANGCSLESTNRTHSVCSCNHLTNFAILMDVVDEH) are GPS. A helical membrane pass occupies residues 768–788 (IFIYISIGICVVFIVIALLTL). Residues 789-801 (KLFNGVFVKSART) lie on the Cytoplasmic side of the membrane. The helical transmembrane segment at 802–822 (SIYTSIYLCLLAIELLFLLGI) threads the bilayer. At 823–828 (EQTETS) the chain is on the extracellular side. A helical transmembrane segment spans residues 829-849 (IFCGFITIFLHCAILSGTAWF). At 850–875 (CYEAFHSYSTLTSDELLLEVDQTPKV) the chain is on the cytoplasmic side. The chain crosses the membrane as a helical span at residues 876 to 896 (NCYYLLSYGLSLSVVAISLVI). Over 897 to 920 (DPSTYTQNDYCVLMEANALFYATF) the chain is Extracellular. Residues 921-941 (VIPVLVFFVAAIGYTFLSWII) form a helical membrane-spanning segment. Topologically, residues 942–968 (LCRKSRTGLKTKEHTRLASVRFDIRCS) are cytoplasmic. A helical membrane pass occupies residues 969–989 (FVFLLLLSAVWCSSYFYLRGA). Residues 990-999 (KMDDDTADVY) are Extracellular-facing. Residues 1000 to 1020 (GYCFICFNTLLGLYIFVFHCI) form a helical membrane-spanning segment. Residues 1021–1707 (QNEKIRREYR…VRCYLEPLAK (687 aa)) are Cytoplasmic-facing. Ser1156 is subject to Phosphoserine. Disordered stretches follow at residues 1169–1188 (AHKQQQQQQQQQQGPLGEGY) and 1236–1260 (KPNSGQHGKKKRGAGGVPASPSGSL). Positions 1172 to 1181 (QQQQQQQQQQ) are enriched in low complexity. Phosphoserine is present on residues Ser1255 and Ser1262. A compositionally biased stretch (low complexity) spans 1316-1326 (QQLHQQQQQQL). Disordered regions lie at residues 1316–1335 (QQLHQQQQQQLSSDEEQVEQ), 1450–1538 (GGGS…SDER), 1563–1582 (APLDYGALPPGSGPQPEHNG), and 1612–1687 (GGRL…QQRH). Ser1327 and Ser1328 each carry phosphoserine. A compositionally biased stretch (low complexity) spans 1456-1481 (GGSVSSRSQQQQLKKQQQQQSLAQQR). Acidic residues-rich tracts occupy residues 1489–1503 (DDDDDEEEEEDEEAT) and 1513–1526 (CDEDEEEDESDLED). Polar residues predominate over residues 1635 to 1650 (QTPAQKRQQLQKLSPQ). The segment covering 1651–1673 (STTSSSSHTSHSNPNPHPLQLTH) has biased composition (low complexity). Positions 1674–1686 (PHPHQHPPHHQQR) are enriched in basic residues.

Belongs to the G-protein coupled receptor 2 family. LN-TM7 subfamily. Forms a heterodimer, consisting of a large extracellular region non-covalently linked to a seven-transmembrane moiety. Proteolytically cleaved into 2 subunits, an extracellular subunit and a seven-transmembrane subunit.

It is found in the cell membrane. In Drosophila yakuba (Fruit fly), this protein is Latrophilin Cirl.